The primary structure comprises 100 residues: Integration host factor subunit alpha (100 aa).

Belongs to the bacterial histone-like protein family. As to quaternary structure, heterodimer of an alpha and a beta chain.

Its function is as follows. This protein is one of the two subunits of integration host factor, a specific DNA-binding protein that functions in genetic recombination as well as in transcriptional and translational control. This Erythrobacter litoralis (strain HTCC2594) protein is Integration host factor subunit alpha.